Here is a 308-residue protein sequence, read N- to C-terminus: MTPCLLIAGPTAAGKTALSLAAAERVGGEIINADSMQVYAGLPLITAQPDAAERARAPHHLFGSIDPAIRYSVGQWTSDVLALISDIRGRGNVPILVGGTGLYFNALTRGLAPVPEIGDAARARAAALLDADGLAGLRAEALRLDPVATNRVDAADRQRLLRIVEVGFETGTALSVFQADTVPPLEPAAWRGIVIEPDREALYRRIDQRFEHMLEAGALDEVAAFMQRDLDPDLPASKALGVPPLIAHLRGEMSLDEARDNAKRDSRRYAKRQGTWFRNQAASWSRIGTLDSEAAISALADILDQPPG.

Residue 9–16 (GPTAAGKT) coordinates ATP. 11 to 16 (TAAGKT) provides a ligand contact to substrate. Interaction with substrate tRNA stretches follow at residues 34-37 (DSMQ) and 158-162 (QRLLR).

The protein belongs to the IPP transferase family. Monomer. The cofactor is Mg(2+).

It catalyses the reaction adenosine(37) in tRNA + dimethylallyl diphosphate = N(6)-dimethylallyladenosine(37) in tRNA + diphosphate. Functionally, catalyzes the transfer of a dimethylallyl group onto the adenine at position 37 in tRNAs that read codons beginning with uridine, leading to the formation of N6-(dimethylallyl)adenosine (i(6)A). The sequence is that of tRNA dimethylallyltransferase from Maricaulis maris (strain MCS10) (Caulobacter maris).